The chain runs to 283 residues: Pantothenate synthetase (283 aa).

Position 31–38 (31–38 (MGALHDGH)) interacts with ATP. The Proton donor role is filled by His-38. (R)-pantoate is bound at residue Gln-62. Residue Gln-62 participates in beta-alanine binding. 148-151 (GKKD) serves as a coordination point for ATP. Position 154 (Gln-154) interacts with (R)-pantoate. Residues Val-177 and 185 to 188 (KSSR) contribute to the ATP site.

This sequence belongs to the pantothenate synthetase family. As to quaternary structure, homodimer.

The protein localises to the cytoplasm. It catalyses the reaction (R)-pantoate + beta-alanine + ATP = (R)-pantothenate + AMP + diphosphate + H(+). It participates in cofactor biosynthesis; (R)-pantothenate biosynthesis; (R)-pantothenate from (R)-pantoate and beta-alanine: step 1/1. Catalyzes the condensation of pantoate with beta-alanine in an ATP-dependent reaction via a pantoyl-adenylate intermediate. The sequence is that of Pantothenate synthetase from Staphylococcus aureus (strain bovine RF122 / ET3-1).